The following is a 446-amino-acid chain: Argininosuccinate lyase (446 aa).

The protein belongs to the lyase 1 family. Argininosuccinate lyase subfamily.

The protein localises to the cytoplasm. The enzyme catalyses 2-(N(omega)-L-arginino)succinate = fumarate + L-arginine. It functions in the pathway amino-acid biosynthesis; L-arginine biosynthesis; L-arginine from L-ornithine and carbamoyl phosphate: step 3/3. The polypeptide is Argininosuccinate lyase (Phocaeicola vulgatus (strain ATCC 8482 / DSM 1447 / JCM 5826 / CCUG 4940 / NBRC 14291 / NCTC 11154) (Bacteroides vulgatus)).